A 282-amino-acid polypeptide reads, in one-letter code: ATP synthase gamma chain (282 aa).

This sequence belongs to the ATPase gamma chain family. F-type ATPases have 2 components, CF(1) - the catalytic core - and CF(0) - the membrane proton channel. CF(1) has five subunits: alpha(3), beta(3), gamma(1), delta(1), epsilon(1). CF(0) has three main subunits: a, b and c.

The protein localises to the cell membrane. Functionally, produces ATP from ADP in the presence of a proton gradient across the membrane. The gamma chain is believed to be important in regulating ATPase activity and the flow of protons through the CF(0) complex. The protein is ATP synthase gamma chain of Clostridium botulinum (strain Kyoto / Type A2).